Reading from the N-terminus, the 397-residue chain is Elongation factor Tu (397 aa).

The tr-type G domain occupies 10 to 206 (KPHVNIGTIG…AVDQNIPEPQ (197 aa)). The G1 stretch occupies residues 19–26 (GHIDHGKT). Position 19–26 (19–26 (GHIDHGKT)) interacts with GTP. T26 lines the Mg(2+) pocket. A G2 region spans residues 62–66 (GITIS). The segment at 83–86 (DCPG) is G3. GTP is bound by residues 83–87 (DCPGH) and 138–141 (NKSD). The segment at 138-141 (NKSD) is G4. The interval 176 to 178 (SAL) is G5.

The protein belongs to the TRAFAC class translation factor GTPase superfamily. Classic translation factor GTPase family. EF-Tu/EF-1A subfamily. As to quaternary structure, monomer.

It localises to the cytoplasm. It carries out the reaction GTP + H2O = GDP + phosphate + H(+). Its function is as follows. GTP hydrolase that promotes the GTP-dependent binding of aminoacyl-tRNA to the A-site of ribosomes during protein biosynthesis. The polypeptide is Elongation factor Tu (Thermobifida fusca (strain YX)).